Reading from the N-terminus, the 209-residue chain is Orotate phosphoribosyltransferase (209 aa).

5-phospho-alpha-D-ribose 1-diphosphate is bound by residues arginine 96, lysine 100, histidine 102, and 122-130 (EDLISTGGS). Residue serine 126 participates in orotate binding.

The protein belongs to the purine/pyrimidine phosphoribosyltransferase family. PyrE subfamily. Homodimer. Mg(2+) is required as a cofactor.

The catalysed reaction is orotidine 5'-phosphate + diphosphate = orotate + 5-phospho-alpha-D-ribose 1-diphosphate. It participates in pyrimidine metabolism; UMP biosynthesis via de novo pathway; UMP from orotate: step 1/2. Its function is as follows. Catalyzes the transfer of a ribosyl phosphate group from 5-phosphoribose 1-diphosphate to orotate, leading to the formation of orotidine monophosphate (OMP). The protein is Orotate phosphoribosyltransferase of Lactococcus lactis subsp. cremoris (strain SK11).